A 185-amino-acid chain; its full sequence is Thiol:disulfide interchange protein DsbE (185 aa).

The Cytoplasmic portion of the chain corresponds to methionine 1–asparagine 4. A helical membrane pass occupies residues valine 5 to alanine 25. Over arginine 26–glutamine 185 the chain is Periplasmic. The 139-residue stretch at alanine 39–aspartate 177 folds into the Thioredoxin domain. Cysteines 80 and 83 form a disulfide.

Belongs to the thioredoxin family. DsbE subfamily.

It localises to the cell inner membrane. Involved in disulfide bond formation. Catalyzes a late, reductive step in the assembly of periplasmic c-type cytochromes, probably the reduction of disulfide bonds of the apocytochrome c to allow covalent linkage with the heme. Possible subunit of a heme lyase. The sequence is that of Thiol:disulfide interchange protein DsbE (dsbE1) from Salmonella typhi.